The following is a 444-amino-acid chain: N-succinylarginine dihydrolase (444 aa).

Substrate contacts are provided by residues 19 to 28, Asn110, and 137 to 138; these read AGLSFGNVAS and HR. Residue Glu174 is part of the active site. Arg214 contacts substrate. His250 is a catalytic residue. Substrate contacts are provided by Asp252 and Asn362. Cys368 (nucleophile) is an active-site residue.

The protein belongs to the succinylarginine dihydrolase family. Homodimer.

The catalysed reaction is N(2)-succinyl-L-arginine + 2 H2O + 2 H(+) = N(2)-succinyl-L-ornithine + 2 NH4(+) + CO2. It participates in amino-acid degradation; L-arginine degradation via AST pathway; L-glutamate and succinate from L-arginine: step 2/5. In terms of biological role, catalyzes the hydrolysis of N(2)-succinylarginine into N(2)-succinylornithine, ammonia and CO(2). This is N-succinylarginine dihydrolase from Shewanella amazonensis (strain ATCC BAA-1098 / SB2B).